Reading from the N-terminus, the 604-residue chain is Elongation factor 4 (604 aa).

One can recognise a tr-type G domain in the interval 7 to 189 (KNIRNFCIIA…QIVTKIPAPS (183 aa)). GTP is bound by residues 19-24 (DHGKST) and 136-139 (NKID).

It belongs to the TRAFAC class translation factor GTPase superfamily. Classic translation factor GTPase family. LepA subfamily.

It is found in the cell membrane. It catalyses the reaction GTP + H2O = GDP + phosphate + H(+). Its function is as follows. Required for accurate and efficient protein synthesis under certain stress conditions. May act as a fidelity factor of the translation reaction, by catalyzing a one-codon backward translocation of tRNAs on improperly translocated ribosomes. Back-translocation proceeds from a post-translocation (POST) complex to a pre-translocation (PRE) complex, thus giving elongation factor G a second chance to translocate the tRNAs correctly. Binds to ribosomes in a GTP-dependent manner. This Lachnospira eligens (strain ATCC 27750 / DSM 3376 / VPI C15-48 / C15-B4) (Eubacterium eligens) protein is Elongation factor 4.